A 144-amino-acid chain; its full sequence is Large ribosomal subunit protein bL31c (144 aa).

A chloroplast-targeting transit peptide spans M1–C48.

This sequence belongs to the bacterial ribosomal protein bL31 family. Type A subfamily. As to quaternary structure, part of the 50S ribosomal subunit.

The protein resides in the plastid. Its subcellular location is the chloroplast. In terms of biological role, binds the 23S rRNA. This Arabidopsis thaliana (Mouse-ear cress) protein is Large ribosomal subunit protein bL31c (RPL31).